Here is a 155-residue protein sequence, read N- to C-terminus: V-type proton ATPase 16 kDa proteolipid subunit c (155 aa).

At 1–10 the chain is on the lumenal side; sequence MADIKNNPEY. The chain crosses the membrane as a helical span at residues 11–33; the sequence is SSFFGVMGASSAMVFSAMGAAYG. At 34-55 the chain is on the cytoplasmic side; it reads TAKSGTGIAAMSVMRPELIMKS. A helical membrane pass occupies residues 56–76; sequence IIPVVMAGIIAIYGLVVAVLI. The Lumenal segment spans residues 77 to 92; that stretch reads ANSLTDGITLYRSFLQ. The chain crosses the membrane as a helical span at residues 93 to 114; sequence LGAGLSVGLSGLAAGFAIGIVG. The Cytoplasmic segment spans residues 115-131; that stretch reads DAGVRGTAQQPRLFVGM. A helical transmembrane segment spans residues 132–152; the sequence is ILILIFAEVLGLYGLIVALIL. At 153-155 the chain is on the lumenal side; it reads STK.

Belongs to the V-ATPase proteolipid subunit family. In terms of assembly, V-ATPase is a heteromultimeric enzyme made up of two complexes: the ATP-hydrolytic V1 complex and the proton translocation V0 complex. The V1 complex consists of three catalytic AB heterodimers that form a heterohexamer, three peripheral stalks each consisting of EG heterodimers, one central rotor including subunits D and F, and the regulatory subunits C and H. The proton translocation complex V0 consists of the proton transport subunit a, a ring of proteolipid subunits c9c'', rotary subunit d, subunits e and f, and the accessory subunits ATP6AP1/Ac45 and ATP6AP2/PRR. Interacts with the V0 complex V-ATPase subunit a4 ATP6V0A4. Interacts with LASS2. Interacts with RNF182; this interaction leads to ubiquitination and degradation via the proteasome pathway. Ubiquitinated by RNF182, leading to its degradation via the ubiquitin-proteasome pathway.

The protein localises to the cytoplasmic vesicle. Its subcellular location is the clathrin-coated vesicle membrane. It is found in the secretory vesicle. It localises to the synaptic vesicle membrane. Functionally, proton-conducting pore forming subunit of the V0 complex of vacuolar(H+)-ATPase (V-ATPase), a multisubunit enzyme composed of a peripheral complex (V1) that hydrolyzes ATP and a membrane integral complex (V0) that translocates protons. V-ATPase is responsible for acidifying and maintaining the pH of intracellular compartments and in some cell types, is targeted to the plasma membrane, where it is responsible for acidifying the extracellular environment. This chain is V-type proton ATPase 16 kDa proteolipid subunit c (Atp6v0c), found in Mus musculus (Mouse).